We begin with the raw amino-acid sequence, 287 residues long: Ketoacyl reductase HetN (287 aa).

NAD(+) is bound at residue 11-35; that stretch reads LTGASRGLGVYIARALAKEQATVVC. S142 contributes to the substrate binding site. The active-site Proton acceptor is Y155.

This sequence belongs to the short-chain dehydrogenases/reductases (SDR) family.

May be involved in repressing heterocyst differentiation and may be essential for preventing all vegetative cells from differentiating. The polypeptide is Ketoacyl reductase HetN (hetN) (Nostoc sp. (strain PCC 7120 / SAG 25.82 / UTEX 2576)).